Here is a 411-residue protein sequence, read N- to C-terminus: Adenylosuccinate synthetase (411 aa).

Residues 11–17 and 39–41 contribute to the GTP site; these read GDEGKGK and GHT. Asp12 (proton acceptor) is an active-site residue. The Mg(2+) site is built by Asp12 and Gly39. IMP is bound by residues 12 to 15, 37 to 40, Thr121, Arg135, Gln215, Thr230, and Arg294; these read DEGK and NAGH. Catalysis depends on His40, which acts as the Proton donor. 290-296 serves as a coordination point for substrate; it reads TTTKRPR. GTP contacts are provided by residues Arg296, 322 to 324, and 400 to 402; these read KLD and STS.

Belongs to the adenylosuccinate synthetase family. As to quaternary structure, homodimer. It depends on Mg(2+) as a cofactor.

It localises to the cytoplasm. It carries out the reaction IMP + L-aspartate + GTP = N(6)-(1,2-dicarboxyethyl)-AMP + GDP + phosphate + 2 H(+). It participates in purine metabolism; AMP biosynthesis via de novo pathway; AMP from IMP: step 1/2. In terms of biological role, plays an important role in the de novo pathway of purine nucleotide biosynthesis. Catalyzes the first committed step in the biosynthesis of AMP from IMP. The protein is Adenylosuccinate synthetase of Helicobacter pylori (strain Shi470).